Here is a 474-residue protein sequence, read N- to C-terminus: Tocopherol cyclase, chloroplastic (474 aa).

The N-terminal 65 residues, 1 to 65 (MNLAVAAALP…TPTPQDRSLR (65 aa)), are a transit peptide targeting the chloroplast.

In terms of tissue distribution, present in all green tissues, both in bundle sheath and in mesophyll cells.

It is found in the plastid. The protein resides in the chloroplast. The catalysed reaction is gamma-tocopherol = 2,3-dimethyl-6-phytylbenzene-1,4-diol. It functions in the pathway cofactor biosynthesis; tocopherol biosynthesis. In terms of biological role, involved in the synthesis of tocopherols (vitamin E), which presumably protect photosynthetic complexes from oxidative stress. Catalyzes the conversion of 2,3-dimethyl-5-phytyl-1,4-hydroquinone (DMPQ) to gamma-tocopherol. The protein is Tocopherol cyclase, chloroplastic of Zea mays (Maize).